The sequence spans 454 residues: Transcription factor bHLH123 (454 aa).

Residues 101 to 113 (SNANANTTSSTSS) show a composition bias toward low complexity. Disordered stretches follow at residues 101 to 127 (SNANANTTSSTSSYQLQESDSSHHHQA), 185 to 228 (ATTT…QFGS), 270 to 348 (AAAG…KRKE), and 398 to 417 (GASLQHQQSDHSTELEVSEE). Composition is skewed to polar residues over residues 185 to 195 (ATTTTPNSSSG) and 207 to 228 (SSDQQPSRNHQQSSLGYSQFGS). Residues 303–324 (EQPKNISEIRDSSSNEVKRGGN) show a composition bias toward basic and acidic residues. Residues 334–383 (KSEAASPSPAFKRKEKMGDRIAALQQLVSPFGKTDAASVLSEAIEYIKFL) form the bHLH domain.

In terms of assembly, homodimer.

It is found in the nucleus. This is Transcription factor bHLH123 (BHLH123) from Arabidopsis thaliana (Mouse-ear cress).